Consider the following 481-residue polypeptide: Alginate biosynthesis protein AlgA (481 aa).

It belongs to the mannose-6-phosphate isomerase type 2 family. Monomer. The cofactor is Co(2+).

It catalyses the reaction D-mannose 6-phosphate = D-fructose 6-phosphate. The enzyme catalyses alpha-D-mannose 1-phosphate + GTP + H(+) = GDP-alpha-D-mannose + diphosphate. The protein operates within nucleotide-sugar biosynthesis; GDP-alpha-D-mannose biosynthesis; GDP-alpha-D-mannose from alpha-D-mannose 1-phosphate (GTP route): step 1/1. It functions in the pathway nucleotide-sugar biosynthesis; GDP-alpha-D-mannose biosynthesis; alpha-D-mannose 1-phosphate from D-fructose 6-phosphate: step 1/2. Its function is as follows. Produces a precursor for alginate polymerization. The alginate layer provides a protective barrier against host immune defenses and antibiotics. The chain is Alginate biosynthesis protein AlgA (algA) from Pseudomonas aeruginosa (strain ATCC 15692 / DSM 22644 / CIP 104116 / JCM 14847 / LMG 12228 / 1C / PRS 101 / PAO1).